The chain runs to 720 residues: Exocyst complex component 7 (720 aa).

2 coiled-coil regions span residues 5-34 and 63-83; these read EDASARKREIEEKLKQEQETLSFIRESLEK and VHKQTENLQRLQENVDKTLSN. Ser-133 carries the phosphoserine modification. The segment at 249 to 268 is disordered; that stretch reads SPAVQTKRKETPTKKAPKRP.

It belongs to the EXO70 family.

It is found in the cytoplasm. Its subcellular location is the cytosol. It localises to the cell membrane. The protein localises to the midbody. The protein resides in the midbody ring. Functionally, component of the exocyst complex involved in the docking of exocytic vesicles with fusion sites on the plasma membrane. It is required for neuron survival and plays an essential role in telencephalon development. In Danio rerio (Zebrafish), this protein is Exocyst complex component 7 (exoc7).